The primary structure comprises 409 residues: DNA primase small subunit (409 aa).

Residues glutamate 46, aspartate 111, and aspartate 113 contribute to the active site. A Zinc knuckle motif motif is present at residues cysteine 123–cysteine 133.

This sequence belongs to the eukaryotic-type primase small subunit family. As to quaternary structure, DNA polymerase alpha:primase is a four subunit enzyme complex, which is assembled throughout the cell cycle, and consists of the two DNA polymerase subunits A POL1 and B POL12, and the DNA primase large PRI2 and small PRI1 subunits.

Its function is as follows. DNA primase is the polymerase that synthesizes small RNA primers for the Okazaki fragments made during discontinuous DNA replication. In a complex with DNA polymerase alpha (DNA polymerase alpha:primase) constitutes a replicative polymerase. Both primase components participate in formation of the active center, but the ATP-binding site is exclusively located on p48. The sequence is that of DNA primase small subunit (PRI1) from Saccharomyces cerevisiae (strain ATCC 204508 / S288c) (Baker's yeast).